The sequence spans 70 residues: Cold shock-like protein CspH (70 aa).

Residues 7–67 (GIVKTFDCKS…GLRGPTAANV (61 aa)) form the CSD domain.

It localises to the cytoplasm. In Salmonella typhi, this protein is Cold shock-like protein CspH (cspH).